Consider the following 73-residue polypeptide: Protein DSS1 HOMOLOG ON CHROMOSOME V (73 aa).

The protein belongs to the DSS1/SEM1 family. In terms of assembly, part of the 26S proteasome. Interacts with BRCA2B. Interacts with EER5. Interacts with UCH1 and UCH2.

Its function is as follows. Subunit of the 26S proteasome which plays a role in ubiquitin-dependent proteolysis. Also associates with the TREX-2 complex that is required for transcription-coupled mRNA export. The chain is Protein DSS1 HOMOLOG ON CHROMOSOME V from Arabidopsis thaliana (Mouse-ear cress).